The following is a 384-amino-acid chain: Cytochrome b (384 aa).

4 consecutive transmembrane segments (helical) span residues 32–52 (VGSL…FLAM), 76–98 (WLIR…LHIG), 113–133 (LWVI…MGYC), and 179–199 (FFAL…MHLM). Heme b is bound by residues histidine 82 and histidine 96. Heme b-binding residues include histidine 183 and histidine 197. Histidine 202 is an a ubiquinone binding site. Transmembrane regions (helical) follow at residues 225 to 245 (FIFK…LFVF), 289 to 309 (LGGV…PYTD), 321 to 341 (LSKF…NLGQ), and 348 to 368 (YIEL…LIVP).

The protein belongs to the cytochrome b family. In terms of assembly, fungal cytochrome b-c1 complex contains 10 subunits; 3 respiratory subunits, 2 core proteins and 5 low-molecular weight proteins. Cytochrome b-c1 complex is a homodimer. Requires heme b as cofactor.

The protein resides in the mitochondrion inner membrane. Functionally, component of the ubiquinol-cytochrome c reductase complex (complex III or cytochrome b-c1 complex) that is part of the mitochondrial respiratory chain. The b-c1 complex mediates electron transfer from ubiquinol to cytochrome c. Contributes to the generation of a proton gradient across the mitochondrial membrane that is then used for ATP synthesis. The sequence is that of Cytochrome b (COB) from Candida parapsilosis (Yeast).